Here is a 103-residue protein sequence, read N- to C-terminus: Small ribosomal subunit protein uS10 (103 aa).

The protein belongs to the universal ribosomal protein uS10 family. Part of the 30S ribosomal subunit.

Functionally, involved in the binding of tRNA to the ribosomes. This is Small ribosomal subunit protein uS10 from Magnetococcus marinus (strain ATCC BAA-1437 / JCM 17883 / MC-1).